Here is a 440-residue protein sequence, read N- to C-terminus: Chromosome partition protein MukF (440 aa).

The segment at 208 to 236 (LSETSGTLRELQDTLEAAGDKLQANLLRI) is leucine-zipper.

The protein belongs to the MukF family. In terms of assembly, interacts, and probably forms a ternary complex, with MukE and MukB via its C-terminal region. The complex formation is stimulated by calcium or magnesium. It is required for an interaction between MukE and MukB.

It localises to the cytoplasm. The protein resides in the nucleoid. Functionally, involved in chromosome condensation, segregation and cell cycle progression. May participate in facilitating chromosome segregation by condensation DNA from both sides of a centrally located replisome during cell division. Not required for mini-F plasmid partitioning. Probably acts via its interaction with MukB and MukE. Overexpression results in anucleate cells. It has a calcium binding activity. This Escherichia coli O9:H4 (strain HS) protein is Chromosome partition protein MukF.